Here is a 233-residue protein sequence, read N- to C-terminus: 1-(5-phosphoribosyl)-5-[(5-phosphoribosylamino)methylideneamino] imidazole-4-carboxamide isomerase (233 aa).

The active-site Proton acceptor is the aspartate 8. The Proton donor role is filled by aspartate 125.

It belongs to the HisA/HisF family.

The protein resides in the cytoplasm. It catalyses the reaction 1-(5-phospho-beta-D-ribosyl)-5-[(5-phospho-beta-D-ribosylamino)methylideneamino]imidazole-4-carboxamide = 5-[(5-phospho-1-deoxy-D-ribulos-1-ylimino)methylamino]-1-(5-phospho-beta-D-ribosyl)imidazole-4-carboxamide. The protein operates within amino-acid biosynthesis; L-histidine biosynthesis; L-histidine from 5-phospho-alpha-D-ribose 1-diphosphate: step 4/9. In Thermococcus kodakarensis (strain ATCC BAA-918 / JCM 12380 / KOD1) (Pyrococcus kodakaraensis (strain KOD1)), this protein is 1-(5-phosphoribosyl)-5-[(5-phosphoribosylamino)methylideneamino] imidazole-4-carboxamide isomerase.